The sequence spans 353 residues: Protein RecA (353 aa).

68–75 (GPESSGKT) serves as a coordination point for ATP.

Belongs to the RecA family.

Its subcellular location is the cytoplasm. In terms of biological role, can catalyze the hydrolysis of ATP in the presence of single-stranded DNA, the ATP-dependent uptake of single-stranded DNA by duplex DNA, and the ATP-dependent hybridization of homologous single-stranded DNAs. It interacts with LexA causing its activation and leading to its autocatalytic cleavage. This is Protein RecA from Roseiflexus sp. (strain RS-1).